The following is a 270-amino-acid chain: Outer membrane protein P.IIC (270 aa).

An N-terminal signal peptide occupies residues 1 to 25 (MQPAKNLLFSSLLFSSLLFSSAARA). At 26-35 (ASEDGGRGPY) the chain is on the extracellular side. A beta stranded transmembrane segment spans residues 36–44 (VQADLAYAA). At 45–76 (ERITHDYPKPTGTGKNKISTVSDYFRNIRTHS) the chain is on the periplasmic side. The chain crosses the membrane as a beta stranded span at residues 77-85 (VHPRVSVGY). The Extracellular portion of the chain corresponds to 86-89 (DFGS). Residues 90–96 (WRIAADY) form a beta stranded membrane-spanning segment. Topologically, residues 97–142 (ARYRKWNNNKYSVSIKELLRNDNSASGVRGHLNIQTQKTEHQENGT) are periplasmic. Residues 143–157 (FHAVSSLGLSTIYDF) form a beta stranded membrane-spanning segment. At 158 to 162 (DTGSR) the chain is on the extracellular side. The chain crosses the membrane as a beta stranded span at residues 163–173 (FKPYIGMRVAY). The Periplasmic segment spans residues 174–221 (GHVRHQVRSVEQETEIITTYPSNGGGKVSLSSKMPPKSAHHQSNSIRR). A disordered region spans residues 194-217 (PSNGGGKVSLSSKMPPKSAHHQSN). Residues 222 to 234 (VGLGVIAGVGFDI) form a beta stranded membrane-spanning segment. Residues 235-237 (TPN) lie on the Extracellular side of the membrane. Residues 238–246 (LTLDTGYRY) form a beta stranded membrane-spanning segment. Residues 247-261 (HNWGRLENTRFKTHE) lie on the Periplasmic side of the membrane. A beta stranded membrane pass occupies residues 262 to 270 (ASLGMRYRF).

This sequence belongs to the opacity porin family. Homotrimer.

The protein localises to the cell outer membrane. This protein serves as a porin. The chain is Outer membrane protein P.IIC (piiC) from Neisseria gonorrhoeae.